The following is a 715-amino-acid chain: Targeting protein for Xklp2-B (715 aa).

The interval 36–167 (NAENIPPDQK…LTMPATPTVL (132 aa)) is disordered. Residues 47-56 (LSETSVNAEQ) are compositionally biased toward polar residues. Over residues 85-103 (QTKRSARRMSKKHRQKILL) the composition is skewed to basic residues. Residues 104-115 (KMKETHLEKETA) are compositionally biased toward basic and acidic residues. The segment covering 141-152 (QPTSSHHGTTSP) has biased composition (polar residues). Ser204 is subject to Phosphoserine; by plk1. Disordered stretches follow at residues 260–291 (PPTSPVQVTKGGHTVPKPFNLSKGKRKHEEAS) and 314–337 (RSRQKEMEGPSPVKMLKPKLTNPK).

This sequence belongs to the TPX2 family. Associates with microtubules. Interacts with aurka and plk1. Interacts with kif15. Phosphorylated during mitosis. Hyperphosphorylated upon assembly of microtubules.

It localises to the nucleus. Its subcellular location is the cytoplasm. It is found in the cytoskeleton. The protein resides in the spindle. The protein localises to the spindle pole. In terms of biological role, spindle assembly factor. Required for normal assembly of mitotic spindles. Mediates the binding kif15 and aurka to spindle microtubules. Required for targeting kif15 to microtubule minus ends. Activates aurka by promoting its autophosphorylation and protects the phosphorylated residue against dephosphorylation. In Xenopus laevis (African clawed frog), this protein is Targeting protein for Xklp2-B (tpx2-b).